We begin with the raw amino-acid sequence, 967 residues long: RNA polymerase II C-terminal domain phosphatase-like 1 (967 aa).

The short motif at 38 to 41 is the Nuclear localization signal (NLS) element; sequence RKKK. The 251-residue stretch at 151–401 folds into the FCP1 homology domain; it reads LNLRCLGIVF…TPVLCVARNV (251 aa). 2 disordered regions span residues 548-611 and 643-712; these read SEPS…VQSR and MEKH…RNSD. Positions 590–603 are enriched in pro residues; sequence PSEPSFPQRPPVQA. The span at 665–684 shows a compositional bias: basic and acidic residues; it reads RMLHENRRPPKESLRRDEQL. DRBM domains follow at residues 724–792 and 855–925; these read TETS…NLAD and GSIT…SVRS. Residues 928 to 967 are disordered; the sequence is GQPLHKRQGSPRSFGGMSNKRLKPDFQRSLQRMPSSGRYS. The tract at residues 945–967 is required for nuclear localization (NLS); sequence SNKRLKPDFQRSLQRMPSSGRYS. A Nuclear localization signal (NLS) motif is present at residues 947–951; that stretch reads KRLKP. Over residues 955 to 967 the composition is skewed to polar residues; it reads RSLQRMPSSGRYS.

In terms of assembly, interacts with FREE1, ANAC019, MYB3, MYB4 and MYB32. Binds to DMS3. Interacts with RCF3. Interacts with RS40 and RS41. Interacts with EIF4A3. Interacts with UPF3. The cofactor is Mg(2+). Co(2+) serves as cofactor. Requires Mn(2+) as cofactor. Expressed at very low levels in roots, leaves, stems, flowers and siliques.

It is found in the nucleus. It localises to the nucleus speckle. The enzyme catalyses O-phospho-L-seryl-[protein] + H2O = L-seryl-[protein] + phosphate. It carries out the reaction O-phospho-L-threonyl-[protein] + H2O = L-threonyl-[protein] + phosphate. Functionally, processively dephosphorylates 'Ser-5' but not 'Ser-2' of the heptad repeats YSPTSPS in the C-terminal domain of the largest RNA polymerase II subunit (RPB1). This promotes the activity of RNA polymerase II. Together with CPL2, required for male gametes fertility. Multifunctional regulator that modulates plant growth, stress, and phytohormones responses. Negative regulator of stress gene transcription involved in abscisic acid (ABA) mediated and jasmonic acid (JA) mediated signaling pathways, NaCl, osmotic stress, wounding, and cold resistance. Negatively regulates the expression of jasmonic acid (JA) biosynthetic genes in response to wounding. Forms a complex with RCF3 that modulates co-transcriptional processes such as mRNA capping and polyadenylation, and functions to repress stress-inducible gene expression. Dephosphorylates RCF3. Involved in the dephosphorylation of EIF4A3. This dephosphorylation retains EIF4A3 in the nucleus and limits its accumulation in the cytoplasm. Is essential for the degradation of the nonsense-mediated mRNA decay (NMD) transcripts. The protein is RNA polymerase II C-terminal domain phosphatase-like 1 of Arabidopsis thaliana (Mouse-ear cress).